Here is a 234-residue protein sequence, read N- to C-terminus: Small ribosomal subunit protein uS3 (234 aa).

The 69-residue stretch at 39–107 (IRKFLKKELY…EVSINIKEVK (69 aa)) folds into the KH type-2 domain.

It belongs to the universal ribosomal protein uS3 family. In terms of assembly, part of the 30S ribosomal subunit. Forms a tight complex with proteins S10 and S14.

In terms of biological role, binds the lower part of the 30S subunit head. Binds mRNA in the 70S ribosome, positioning it for translation. In Helicobacter acinonychis (strain Sheeba), this protein is Small ribosomal subunit protein uS3.